A 641-amino-acid polypeptide reads, in one-letter code: Phosphomethylpyrimidine synthase (641 aa).

The span at 1 to 13 (MNIRSNPDTTRPA) shows a compositional bias: polar residues. A disordered region spans residues 1-21 (MNIRSNPDTTRPAVTTGGLPS). Substrate-binding positions include asparagine 221, methionine 250, tyrosine 279, histidine 315, 335-337 (SRG), 376-379 (DGLR), and glutamate 415. Position 419 (histidine 419) interacts with Zn(2+). Tyrosine 442 contributes to the substrate binding site. Histidine 483 contacts Zn(2+). Residues cysteine 563, cysteine 566, and cysteine 571 each coordinate [4Fe-4S] cluster.

This sequence belongs to the ThiC family. As to quaternary structure, homodimer. The cofactor is [4Fe-4S] cluster.

It carries out the reaction 5-amino-1-(5-phospho-beta-D-ribosyl)imidazole + S-adenosyl-L-methionine = 4-amino-2-methyl-5-(phosphooxymethyl)pyrimidine + CO + 5'-deoxyadenosine + formate + L-methionine + 3 H(+). The protein operates within cofactor biosynthesis; thiamine diphosphate biosynthesis. Its function is as follows. Catalyzes the synthesis of the hydroxymethylpyrimidine phosphate (HMP-P) moiety of thiamine from aminoimidazole ribotide (AIR) in a radical S-adenosyl-L-methionine (SAM)-dependent reaction. The protein is Phosphomethylpyrimidine synthase of Rhodopseudomonas palustris (strain BisB5).